A 565-amino-acid polypeptide reads, in one-letter code: Sulfite reductase [NADPH] hemoprotein beta-component (565 aa).

[4Fe-4S] cluster-binding residues include Cys429, Cys435, Cys474, and Cys478. Residue Cys478 participates in siroheme binding.

This sequence belongs to the nitrite and sulfite reductase 4Fe-4S domain family. Alpha(8)-beta(8). The alpha component is a flavoprotein, the beta component is a hemoprotein. It depends on siroheme as a cofactor. [4Fe-4S] cluster is required as a cofactor.

It carries out the reaction hydrogen sulfide + 3 NADP(+) + 3 H2O = sulfite + 3 NADPH + 4 H(+). Its pathway is sulfur metabolism; hydrogen sulfide biosynthesis; hydrogen sulfide from sulfite (NADPH route): step 1/1. Its function is as follows. Component of the sulfite reductase complex that catalyzes the 6-electron reduction of sulfite to sulfide. This is one of several activities required for the biosynthesis of L-cysteine from sulfate. In Shewanella sp. (strain MR-4), this protein is Sulfite reductase [NADPH] hemoprotein beta-component.